A 290-amino-acid polypeptide reads, in one-letter code: Lipoyl synthase 2 (290 aa).

Positions 37, 42, 48, 63, 67, 70, and 283 each coordinate [4Fe-4S] cluster. The Radical SAM core domain maps to 49–272; that stretch reads YGQKTATFLL…GNIARELGFS (224 aa).

The protein belongs to the radical SAM superfamily. Lipoyl synthase family. It depends on [4Fe-4S] cluster as a cofactor.

Its subcellular location is the cytoplasm. It catalyses the reaction [[Fe-S] cluster scaffold protein carrying a second [4Fe-4S](2+) cluster] + N(6)-octanoyl-L-lysyl-[protein] + 2 oxidized [2Fe-2S]-[ferredoxin] + 2 S-adenosyl-L-methionine + 4 H(+) = [[Fe-S] cluster scaffold protein] + N(6)-[(R)-dihydrolipoyl]-L-lysyl-[protein] + 4 Fe(3+) + 2 hydrogen sulfide + 2 5'-deoxyadenosine + 2 L-methionine + 2 reduced [2Fe-2S]-[ferredoxin]. It functions in the pathway protein modification; protein lipoylation via endogenous pathway; protein N(6)-(lipoyl)lysine from octanoyl-[acyl-carrier-protein]: step 2/2. Catalyzes the radical-mediated insertion of two sulfur atoms into the C-6 and C-8 positions of the octanoyl moiety bound to the lipoyl domains of lipoate-dependent enzymes, thereby converting the octanoylated domains into lipoylated derivatives. The sequence is that of Lipoyl synthase 2 from Thermosynechococcus vestitus (strain NIES-2133 / IAM M-273 / BP-1).